We begin with the raw amino-acid sequence, 265 residues long: Eukaryotic translation initiation factor 3 subunit J (265 aa).

Composition is skewed to acidic residues over residues 1–12 (MAPERWDDEEDS) and 26–44 (DEEEDEVLDSWDAAEDSEV). Disordered stretches follow at residues 1–113 (MAPE…DADL) and 212–265 (TMSN…DDFM). Composition is skewed to basic and acidic residues over residues 45–65 (EREKAAKAAEAKAKADAEAAA) and 73–86 (RIQEHKEERKKKAE). Positions 61 to 95 (AEAAAKKKSKSQRIQEHKEERKKKAEEEDSDSEEE) form a coiled coil. Residues 87–97 (EEDSDSEEEDD) show a composition bias toward acidic residues. A compositionally biased stretch (basic and acidic residues) spans 216–228 (EKMREERAADKGS). Residues 251-265 (DYDNGDDGLGDDDFM) show a composition bias toward acidic residues.

This sequence belongs to the eIF-3 subunit J family. In terms of assembly, component of the eukaryotic translation initiation factor 3 (eIF-3) complex.

The protein localises to the cytoplasm. Functionally, component of the eukaryotic translation initiation factor 3 (eIF-3) complex, which is involved in protein synthesis of a specialized repertoire of mRNAs and, together with other initiation factors, stimulates binding of mRNA and methionyl-tRNAi to the 40S ribosome. The eIF-3 complex specifically targets and initiates translation of a subset of mRNAs involved in cell proliferation. In Aspergillus oryzae (strain ATCC 42149 / RIB 40) (Yellow koji mold), this protein is Eukaryotic translation initiation factor 3 subunit J (hcr1).